A 757-amino-acid polypeptide reads, in one-letter code: Polyribonucleotide nucleotidyltransferase (757 aa).

Mg(2+)-binding residues include Asp-525 and Asp-531. Residues 591 to 650 (PRVISVNIPVDKIGELIGPKGKTINAIQDETGADISIEEDGTVYIGAVDGPSADAARAQV) enclose the KH domain. The region spanning 662 to 734 (GESFLGTVVK…DRGKLSLAPV (73 aa)) is the S1 motif domain. The interval 737–757 (ETADQEGRDAASHGSEAPAEG) is disordered.

The protein belongs to the polyribonucleotide nucleotidyltransferase family. It depends on Mg(2+) as a cofactor.

The protein resides in the cytoplasm. The enzyme catalyses RNA(n+1) + phosphate = RNA(n) + a ribonucleoside 5'-diphosphate. Involved in mRNA degradation. Catalyzes the phosphorolysis of single-stranded polyribonucleotides processively in the 3'- to 5'-direction. This chain is Polyribonucleotide nucleotidyltransferase, found in Clavibacter michiganensis subsp. michiganensis (strain NCPPB 382).